An 879-amino-acid polypeptide reads, in one-letter code: Alanine--tRNA ligase (879 aa).

Zn(2+) is bound by residues His567, His571, Cys669, and His673.

The protein belongs to the class-II aminoacyl-tRNA synthetase family. Requires Zn(2+) as cofactor.

It localises to the cytoplasm. It carries out the reaction tRNA(Ala) + L-alanine + ATP = L-alanyl-tRNA(Ala) + AMP + diphosphate. Catalyzes the attachment of alanine to tRNA(Ala) in a two-step reaction: alanine is first activated by ATP to form Ala-AMP and then transferred to the acceptor end of tRNA(Ala). Also edits incorrectly charged Ser-tRNA(Ala) and Gly-tRNA(Ala) via its editing domain. The protein is Alanine--tRNA ligase of Lactobacillus acidophilus (strain ATCC 700396 / NCK56 / N2 / NCFM).